A 139-amino-acid chain; its full sequence is Large-conductance mechanosensitive channel (139 aa).

A run of 3 helical transmembrane segments spans residues 10–30 (FAVK…AAFG), 40–60 (VIMP…YYIA), and 80–100 (LAYG…FIIF).

Belongs to the MscL family. As to quaternary structure, homopentamer.

Its subcellular location is the cell inner membrane. Functionally, channel that opens in response to stretch forces in the membrane lipid bilayer. May participate in the regulation of osmotic pressure changes within the cell. This chain is Large-conductance mechanosensitive channel, found in Janthinobacterium sp. (strain Marseille) (Minibacterium massiliensis).